The sequence spans 396 residues: 1-deoxy-D-xylulose 5-phosphate reductoisomerase (396 aa).

NADPH-binding residues include T17, G18, S19, I20, N47, and N130. K131 provides a ligand contact to 1-deoxy-D-xylulose 5-phosphate. E132 is an NADPH binding site. Mn(2+) is bound at residue D156. Positions 157, 158, 182, and 205 each coordinate 1-deoxy-D-xylulose 5-phosphate. A Mn(2+)-binding site is contributed by E158. G211 is an NADPH binding site. 1-deoxy-D-xylulose 5-phosphate contacts are provided by S218, N223, K224, and E227. E227 lines the Mn(2+) pocket.

Belongs to the DXR family. Mg(2+) is required as a cofactor. Mn(2+) serves as cofactor.

The enzyme catalyses 2-C-methyl-D-erythritol 4-phosphate + NADP(+) = 1-deoxy-D-xylulose 5-phosphate + NADPH + H(+). Its pathway is isoprenoid biosynthesis; isopentenyl diphosphate biosynthesis via DXP pathway; isopentenyl diphosphate from 1-deoxy-D-xylulose 5-phosphate: step 1/6. Its function is as follows. Catalyzes the NADPH-dependent rearrangement and reduction of 1-deoxy-D-xylulose-5-phosphate (DXP) to 2-C-methyl-D-erythritol 4-phosphate (MEP). The polypeptide is 1-deoxy-D-xylulose 5-phosphate reductoisomerase (Rhizobium etli (strain ATCC 51251 / DSM 11541 / JCM 21823 / NBRC 15573 / CFN 42)).